The primary structure comprises 324 residues: 3'-5' exoribonuclease YhaM (324 aa).

An HD domain is found at 163 to 279 (HVVSMLELAK…LHYIDNLDAK (117 aa)).

It belongs to the YhaM family.

In terms of biological role, shows a 3'-5' exoribonuclease activity. In Geobacillus sp. (strain WCH70), this protein is 3'-5' exoribonuclease YhaM.